The chain runs to 840 residues: Probable alpha-glucuronidase A (840 aa).

The signal sequence occupies residues 1 to 19 (MWSGIPIFALLSSIGIAAA). 13 N-linked (GlcNAc...) asparagine glycosylation sites follow: Asn-50, Asn-149, Asn-222, Asn-262, Asn-279, Asn-310, Asn-465, Asn-527, Asn-576, Asn-610, Asn-682, Asn-723, and Asn-732.

Belongs to the glycosyl hydrolase 67 family.

Its subcellular location is the secreted. The enzyme catalyses an alpha-D-glucuronoside + H2O = D-glucuronate + an alcohol. Alpha-glucuronidase involved in the hydrolysis of xylan, a major structural heterogeneous polysaccharide found in plant biomass representing the second most abundant polysaccharide in the biosphere, after cellulose. Releases 4-O-methylglucuronic acid from xylan. This chain is Probable alpha-glucuronidase A (aguA), found in Aspergillus fumigatus (strain CBS 144.89 / FGSC A1163 / CEA10) (Neosartorya fumigata).